The following is a 465-amino-acid chain: Glutamyl-tRNA reductase 2 (465 aa).

Substrate-binding positions include 62-65, Ser-122, 127-129, and Gln-133; these read TCNR and EGQ. Residue Cys-63 is the Nucleophile of the active site. NADP(+) is bound at residue 204 to 209; that stretch reads GAGKMG.

Belongs to the glutamyl-tRNA reductase family.

Its subcellular location is the plastid. It localises to the chloroplast. The catalysed reaction is (S)-4-amino-5-oxopentanoate + tRNA(Glu) + NADP(+) = L-glutamyl-tRNA(Glu) + NADPH + H(+). It participates in porphyrin-containing compound metabolism; protoporphyrin-IX biosynthesis; 5-aminolevulinate from L-glutamyl-tRNA(Glu): step 1/2. Functionally, catalyzes the NADPH-dependent reduction of glutamyl-tRNA(Glu) to glutamate 1-semialdehyde (GSA). This is Glutamyl-tRNA reductase 2 (HEMA2) from Hordeum vulgare (Barley).